Reading from the N-terminus, the 199-residue chain is Shikimate kinase (199 aa).

14–19 (GSGKST) is a binding site for ATP. Serine 18 serves as a coordination point for Mg(2+). Positions 36, 60, and 82 each coordinate substrate. Arginine 120 is an ATP binding site. Arginine 147 is a binding site for substrate.

Belongs to the shikimate kinase family. As to quaternary structure, monomer. Mg(2+) serves as cofactor.

Its subcellular location is the cytoplasm. It catalyses the reaction shikimate + ATP = 3-phosphoshikimate + ADP + H(+). It participates in metabolic intermediate biosynthesis; chorismate biosynthesis; chorismate from D-erythrose 4-phosphate and phosphoenolpyruvate: step 5/7. Its function is as follows. Catalyzes the specific phosphorylation of the 3-hydroxyl group of shikimic acid using ATP as a cosubstrate. The chain is Shikimate kinase from Chlorobium limicola (strain DSM 245 / NBRC 103803 / 6330).